The primary structure comprises 235 residues: 2-C-methyl-D-erythritol 4-phosphate cytidylyltransferase (235 aa).

This sequence belongs to the IspD/TarI cytidylyltransferase family. IspD subfamily.

The catalysed reaction is 2-C-methyl-D-erythritol 4-phosphate + CTP + H(+) = 4-CDP-2-C-methyl-D-erythritol + diphosphate. It functions in the pathway isoprenoid biosynthesis; isopentenyl diphosphate biosynthesis via DXP pathway; isopentenyl diphosphate from 1-deoxy-D-xylulose 5-phosphate: step 2/6. In terms of biological role, catalyzes the formation of 4-diphosphocytidyl-2-C-methyl-D-erythritol from CTP and 2-C-methyl-D-erythritol 4-phosphate (MEP). The protein is 2-C-methyl-D-erythritol 4-phosphate cytidylyltransferase of Pseudomonas putida (strain ATCC 47054 / DSM 6125 / CFBP 8728 / NCIMB 11950 / KT2440).